The following is a 242-amino-acid chain: Pyridoxine 5'-phosphate synthase (242 aa).

Residue asparagine 7 coordinates 3-amino-2-oxopropyl phosphate. A 1-deoxy-D-xylulose 5-phosphate-binding site is contributed by 9-10; it reads DH. Arginine 18 is a binding site for 3-amino-2-oxopropyl phosphate. Histidine 43 functions as the Proton acceptor in the catalytic mechanism. Positions 45 and 50 each coordinate 1-deoxy-D-xylulose 5-phosphate. Glutamate 70 acts as the Proton acceptor in catalysis. Threonine 100 is a binding site for 1-deoxy-D-xylulose 5-phosphate. Residue histidine 191 is the Proton donor of the active site. Residues glycine 192 and 213–214 each bind 3-amino-2-oxopropyl phosphate; that span reads GH.

The protein belongs to the PNP synthase family. In terms of assembly, homooctamer; tetramer of dimers.

The protein resides in the cytoplasm. It carries out the reaction 3-amino-2-oxopropyl phosphate + 1-deoxy-D-xylulose 5-phosphate = pyridoxine 5'-phosphate + phosphate + 2 H2O + H(+). It participates in cofactor biosynthesis; pyridoxine 5'-phosphate biosynthesis; pyridoxine 5'-phosphate from D-erythrose 4-phosphate: step 5/5. In terms of biological role, catalyzes the complicated ring closure reaction between the two acyclic compounds 1-deoxy-D-xylulose-5-phosphate (DXP) and 3-amino-2-oxopropyl phosphate (1-amino-acetone-3-phosphate or AAP) to form pyridoxine 5'-phosphate (PNP) and inorganic phosphate. The chain is Pyridoxine 5'-phosphate synthase from Chromobacterium violaceum (strain ATCC 12472 / DSM 30191 / JCM 1249 / CCUG 213 / NBRC 12614 / NCIMB 9131 / NCTC 9757 / MK).